A 73-amino-acid polypeptide reads, in one-letter code: MKADIHPVYEAITATCSCGNVIETRSTLAKPLSLDVCNECHPFYTGKQKTLDVGGRVDKFKSRFGAFGATKKA.

Zn(2+) contacts are provided by cysteine 16, cysteine 18, cysteine 37, and cysteine 40.

The protein belongs to the bacterial ribosomal protein bL31 family. Type A subfamily. In terms of assembly, part of the 50S ribosomal subunit. Zn(2+) serves as cofactor.

Its function is as follows. Binds the 23S rRNA. This is Large ribosomal subunit protein bL31 from Pseudomonas fluorescens (strain ATCC BAA-477 / NRRL B-23932 / Pf-5).